A 162-amino-acid polypeptide reads, in one-letter code: Transcription elongation factor GreA (162 aa).

Residues 44-69 (SENAEYEAAREKQAFVEARIKHLEDI) adopt a coiled-coil conformation.

It belongs to the GreA/GreB family.

Its function is as follows. Necessary for efficient RNA polymerase transcription elongation past template-encoded arresting sites. The arresting sites in DNA have the property of trapping a certain fraction of elongating RNA polymerases that pass through, resulting in locked ternary complexes. Cleavage of the nascent transcript by cleavage factors such as GreA or GreB allows the resumption of elongation from the new 3'terminus. GreA releases sequences of 2 to 3 nucleotides. The protein is Transcription elongation factor GreA of Rickettsia bellii (strain RML369-C).